A 558-amino-acid chain; its full sequence is MRASKFFYKTLREDPKDAEATSHKLLIRASMIKQIASGVYAFLPFGHKVLKKIETVVREEMDRIGGQEMTMSIMMPAEMWKKTGRWELYGDDMIKFKDRKEQDFCLGPTHEEQITTLAGQLISSYKQLPQLVYQIQTKFRDEPRPRFGLIRLREFVMKDAYSFHDSEESLKTTYDQVLNAYKRILERIGLNYEVVAADPGQIGGTLSHEFIVPAEVGESTVFKCDSCGYVATSEVATSVLPAPAFLEKPALEKVHTPDTSSIEDVAEFLQLSKERIIKAVMVIGDSRPYMILVRGDRELDESKMNRRFTQWRMMTDEEILSMGFIPGFVGPREGINEITILKDKSLESLDWGVIGANERDYHIVGVEVSELPFHEIVDLAEVAEGDLCPQCGSPLRSFTGLEVGHIFRLGTRYSEPLEAFYHSEDGERKPFIMGCYGIGVTRLVSAVIEQHHDDFGIVWPWSVAPYHVVIIPIGDVEAQVQELENTLSSAGLDVFVDDRDERPGVKFVDADLIGFPVRLVVNAKKEGKVEIKFRKTGETLLVGQEDVLDTVLRGAVNL.

Belongs to the class-II aminoacyl-tRNA synthetase family. ProS type 1 subfamily. As to quaternary structure, homodimer.

The protein localises to the cytoplasm. The catalysed reaction is tRNA(Pro) + L-proline + ATP = L-prolyl-tRNA(Pro) + AMP + diphosphate. In terms of biological role, catalyzes the attachment of proline to tRNA(Pro) in a two-step reaction: proline is first activated by ATP to form Pro-AMP and then transferred to the acceptor end of tRNA(Pro). As ProRS can inadvertently accommodate and process non-cognate amino acids such as alanine and cysteine, to avoid such errors it has two additional distinct editing activities against alanine. One activity is designated as 'pretransfer' editing and involves the tRNA(Pro)-independent hydrolysis of activated Ala-AMP. The other activity is designated 'posttransfer' editing and involves deacylation of mischarged Ala-tRNA(Pro). The misacylated Cys-tRNA(Pro) is not edited by ProRS. This chain is Proline--tRNA ligase, found in Coprothermobacter proteolyticus (strain ATCC 35245 / DSM 5265 / OCM 4 / BT).